A 430-amino-acid polypeptide reads, in one-letter code: Dihydroorotase (430 aa).

The Zn(2+) site is built by histidine 61 and histidine 63. Substrate contacts are provided by residues 63-65 (HLR) and asparagine 95. Zn(2+)-binding residues include aspartate 153, histidine 180, and histidine 233. Asparagine 279 lines the substrate pocket. A Zn(2+)-binding site is contributed by aspartate 306. The active site involves aspartate 306. Histidine 310 is a substrate binding site.

It belongs to the metallo-dependent hydrolases superfamily. DHOase family. Class I DHOase subfamily. The cofactor is Zn(2+).

The catalysed reaction is (S)-dihydroorotate + H2O = N-carbamoyl-L-aspartate + H(+). The protein operates within pyrimidine metabolism; UMP biosynthesis via de novo pathway; (S)-dihydroorotate from bicarbonate: step 3/3. Catalyzes the reversible cyclization of carbamoyl aspartate to dihydroorotate. In Caldicellulosiruptor saccharolyticus (strain ATCC 43494 / DSM 8903 / Tp8T 6331), this protein is Dihydroorotase.